A 1057-amino-acid chain; its full sequence is Carbamoyl phosphate synthase large chain (1057 aa).

The interval 1 to 401 (MPKRDDIKTI…SLLKAIRSLE (401 aa)) is carboxyphosphate synthetic domain. Arg-129, Arg-169, Gly-175, Gly-176, Lys-208, Ile-210, Glu-215, Gly-241, Ile-242, His-243, Gln-284, and Glu-298 together coordinate ATP. In terms of domain architecture, ATP-grasp 1 spans 133–327 (RTLMNDLNVP…IAKLAAKIAV (195 aa)). Mg(2+) contacts are provided by Gln-284, Glu-298, and Asn-300. Residues Gln-284, Glu-298, and Asn-300 each coordinate Mn(2+). The tract at residues 402-546 (YGVHHLGLSN…YGTYEYENES (145 aa)) is oligomerization domain. Residues 547–929 (IVTDKEKILV…ALYKGLTGSG (383 aa)) form a carbamoyl phosphate synthetic domain region. An ATP-grasp 2 domain is found at 671–861 (EALLREIAVP…MAQLAMRAIM (191 aa)). The ATP site is built by Arg-707, Arg-746, Leu-748, Glu-752, Gly-777, Val-778, His-779, Ser-780, Gln-820, and Glu-832. Residues Gln-820, Glu-832, and Asn-834 each contribute to the Mg(2+) site. The Mn(2+) site is built by Gln-820, Glu-832, and Asn-834. Residues 930–1057 (FEVKDHGTVL…ESMTFTMRNV (128 aa)) enclose the MGS-like domain. The interval 930–1057 (FEVKDHGTVL…ESMTFTMRNV (128 aa)) is allosteric domain.

The protein belongs to the CarB family. As to quaternary structure, composed of two chains; the small (or glutamine) chain promotes the hydrolysis of glutamine to ammonia, which is used by the large (or ammonia) chain to synthesize carbamoyl phosphate. Tetramer of heterodimers (alpha,beta)4. It depends on Mg(2+) as a cofactor. The cofactor is Mn(2+).

The catalysed reaction is hydrogencarbonate + L-glutamine + 2 ATP + H2O = carbamoyl phosphate + L-glutamate + 2 ADP + phosphate + 2 H(+). It catalyses the reaction hydrogencarbonate + NH4(+) + 2 ATP = carbamoyl phosphate + 2 ADP + phosphate + 2 H(+). It functions in the pathway amino-acid biosynthesis; L-arginine biosynthesis; carbamoyl phosphate from bicarbonate: step 1/1. The protein operates within pyrimidine metabolism; UMP biosynthesis via de novo pathway; (S)-dihydroorotate from bicarbonate: step 1/3. Functionally, large subunit of the glutamine-dependent carbamoyl phosphate synthetase (CPSase). CPSase catalyzes the formation of carbamoyl phosphate from the ammonia moiety of glutamine, carbonate, and phosphate donated by ATP, constituting the first step of 2 biosynthetic pathways, one leading to arginine and/or urea and the other to pyrimidine nucleotides. The large subunit (synthetase) binds the substrates ammonia (free or transferred from glutamine from the small subunit), hydrogencarbonate and ATP and carries out an ATP-coupled ligase reaction, activating hydrogencarbonate by forming carboxy phosphate which reacts with ammonia to form carbamoyl phosphate. This chain is Carbamoyl phosphate synthase large chain, found in Staphylococcus epidermidis (strain ATCC 12228 / FDA PCI 1200).